Here is a 205-residue protein sequence, read N- to C-terminus: Large ribosomal subunit protein uL10 (205 aa).

The segment at 167 to 205 is disordered; sequence AQGAAPAEAKAEAPASEEKAADTPAEQPAESAPEAAPEA. Composition is skewed to low complexity over residues 169–180 and 190–205; these read GAAPAEAKAEAP and PAEQ…APEA.

The protein belongs to the universal ribosomal protein uL10 family. As to quaternary structure, part of the ribosomal stalk of the 50S ribosomal subunit. The N-terminus interacts with L11 and the large rRNA to form the base of the stalk. The C-terminus forms an elongated spine to which L12 dimers bind in a sequential fashion forming a multimeric L10(L12)X complex.

Forms part of the ribosomal stalk, playing a central role in the interaction of the ribosome with GTP-bound translation factors. The protein is Large ribosomal subunit protein uL10 of Treponema denticola (strain ATCC 35405 / DSM 14222 / CIP 103919 / JCM 8153 / KCTC 15104).